A 357-amino-acid polypeptide reads, in one-letter code: UPF0283 membrane protein BMEA_A1074 (357 aa).

Residues 1–36 are disordered; sequence MSDKTPRKPTAFRLEQPARVSAASEQEEPRRPRAVK. Over residues 27-36 the composition is skewed to basic and acidic residues; the sequence is EEPRRPRAVK. 2 helical membrane-spanning segments follow: residues 78–98 and 109–129; these read ILFGALGILVSFAIGIWTEDL and LGWTALGVAMVALAAFAAIIL.

Belongs to the UPF0283 family.

The protein localises to the cell inner membrane. The sequence is that of UPF0283 membrane protein BMEA_A1074 from Brucella melitensis biotype 2 (strain ATCC 23457).